Here is a 380-residue protein sequence, read N- to C-terminus: Cytochrome b (380 aa).

Helical transmembrane passes span 34–54 (FGSLLGICLATQILTGLLLAA), 78–99 (WLIRNLHANGASFFFICIYLHI), 114–134 (WNTGVILLLTLMATAFVGYVL), and 179–199 (FFTLHFLLPFMIMGLTLIHLT). The heme b site is built by His84 and His98. Heme b-binding residues include His183 and His197. A ubiquinone is bound at residue His202. The next 4 helical transmembrane spans lie at 227 to 247 (LKDILGFTLMLLPLMTLALFS), 289 to 309 (LGGVLALAASVLILFLAPLLH), 321 to 341 (FSQLLFWTLAANLLILTWVGS), and 348 to 368 (FIIIGQLASLTYFTILLILFP).

This sequence belongs to the cytochrome b family. In terms of assembly, the cytochrome bc1 complex contains 11 subunits: 3 respiratory subunits (MT-CYB, CYC1 and UQCRFS1), 2 core proteins (UQCRC1 and UQCRC2) and 6 low-molecular weight proteins (UQCRH/QCR6, UQCRB/QCR7, UQCRQ/QCR8, UQCR10/QCR9, UQCR11/QCR10 and a cleavage product of UQCRFS1). This cytochrome bc1 complex then forms a dimer. Requires heme b as cofactor.

The protein localises to the mitochondrion inner membrane. Its function is as follows. Component of the ubiquinol-cytochrome c reductase complex (complex III or cytochrome b-c1 complex) that is part of the mitochondrial respiratory chain. The b-c1 complex mediates electron transfer from ubiquinol to cytochrome c. Contributes to the generation of a proton gradient across the mitochondrial membrane that is then used for ATP synthesis. This Antigone antigone (Sarus crane) protein is Cytochrome b (MT-CYB).